The chain runs to 119 residues: Beta-2-microglobulin (119 aa).

Residues 1–20 form the signal peptide; it reads MARSVVVSLFVLLALAGLEA. Residues 25–114 enclose the Ig-like C1-type domain; sequence PKIQVYSRHP…VTFQTPKTVK (90 aa).

It belongs to the beta-2-microglobulin family. As to quaternary structure, heterodimer of an alpha chain and a beta chain. Beta-2-microglobulin is the beta-chain of major histocompatibility complex class I molecules.

Its subcellular location is the secreted. In terms of biological role, component of the class I major histocompatibility complex (MHC). Involved in the presentation of peptide antigens to the immune system. This chain is Beta-2-microglobulin (B2M), found in Brachyteles arachnoides (Southern muriqui).